The sequence spans 261 residues: TM2 domain-containing protein 3 (261 aa).

The signal sequence occupies residues 1–44; the sequence is MEAAAEPLRSVRHLSRVLLFLSQCYILSGDGSLNLEHSQPLAQA. Over 45–193 the chain is Extracellular; the sequence is IKDPGPTRTF…RTFPKLLYCN (149 aa). N-linked (GlcNAc...) asparagine glycosylation is found at N101, N136, N154, N171, N183, and N193. A helical transmembrane segment spans residues 194-214; that stretch reads WTGGYKWSTALALSITLGGFG. Residues 197 to 244 enclose the TM2 domain; it reads GYKWSTALALSITLGGFGADRFYLGQWREGLGKLFSFGGLGIWTLIDV. Residues 215-229 lie on the Cytoplasmic side of the membrane; sequence ADRFYLGQWREGLGK. The chain crosses the membrane as a helical span at residues 230 to 250; that stretch reads LFSFGGLGIWTLIDVLLIGVG. The Extracellular portion of the chain corresponds to 251–261; that stretch reads YVGPADGSLYI.

It belongs to the TM2 family.

The protein localises to the membrane. The chain is TM2 domain-containing protein 3 (Tm2d3) from Mus musculus (Mouse).